We begin with the raw amino-acid sequence, 89 residues long: LYR motif-containing protein 4 (89 aa).

The protein belongs to the complex I LYR family.

It is found in the mitochondrion. The protein resides in the nucleus. Its pathway is cofactor biosynthesis; iron-sulfur cluster biosynthesis. Its function is as follows. Required for nuclear and mitochondrial iron-sulfur protein biosynthesis. In Danio rerio (Zebrafish), this protein is LYR motif-containing protein 4 (lyrm4).